The primary structure comprises 82 residues: Conotoxin Cal30 (82 aa).

Positions M1–S19 are cleaved as a signal peptide.

Post-translationally, may contain 5 disulfide bonds. Expressed by the venom duct.

It is found in the secreted. In terms of biological role, probable neurotoxin. The chain is Conotoxin Cal30 from Californiconus californicus (California cone).